We begin with the raw amino-acid sequence, 345 residues long: S-adenosylmethionine:tRNA ribosyltransferase-isomerase (345 aa).

Belongs to the QueA family. In terms of assembly, monomer.

Its subcellular location is the cytoplasm. The enzyme catalyses 7-aminomethyl-7-carbaguanosine(34) in tRNA + S-adenosyl-L-methionine = epoxyqueuosine(34) in tRNA + adenine + L-methionine + 2 H(+). It participates in tRNA modification; tRNA-queuosine biosynthesis. In terms of biological role, transfers and isomerizes the ribose moiety from AdoMet to the 7-aminomethyl group of 7-deazaguanine (preQ1-tRNA) to give epoxyqueuosine (oQ-tRNA). This chain is S-adenosylmethionine:tRNA ribosyltransferase-isomerase, found in Shewanella loihica (strain ATCC BAA-1088 / PV-4).